Consider the following 355-residue polypeptide: UDP-N-acetylglucosamine--N-acetylmuramyl-(pentapeptide) pyrophosphoryl-undecaprenol N-acetylglucosamine transferase (355 aa).

Residues 15 to 17 (TGG), Asn-127, Arg-163, Ser-191, Ile-244, 263 to 268 (ALTVSE), and Gln-288 contribute to the UDP-N-acetyl-alpha-D-glucosamine site.

It belongs to the glycosyltransferase 28 family. MurG subfamily.

The protein localises to the cell inner membrane. The enzyme catalyses di-trans,octa-cis-undecaprenyl diphospho-N-acetyl-alpha-D-muramoyl-L-alanyl-D-glutamyl-meso-2,6-diaminopimeloyl-D-alanyl-D-alanine + UDP-N-acetyl-alpha-D-glucosamine = di-trans,octa-cis-undecaprenyl diphospho-[N-acetyl-alpha-D-glucosaminyl-(1-&gt;4)]-N-acetyl-alpha-D-muramoyl-L-alanyl-D-glutamyl-meso-2,6-diaminopimeloyl-D-alanyl-D-alanine + UDP + H(+). It participates in cell wall biogenesis; peptidoglycan biosynthesis. Functionally, cell wall formation. Catalyzes the transfer of a GlcNAc subunit on undecaprenyl-pyrophosphoryl-MurNAc-pentapeptide (lipid intermediate I) to form undecaprenyl-pyrophosphoryl-MurNAc-(pentapeptide)GlcNAc (lipid intermediate II). The chain is UDP-N-acetylglucosamine--N-acetylmuramyl-(pentapeptide) pyrophosphoryl-undecaprenol N-acetylglucosamine transferase from Salmonella arizonae (strain ATCC BAA-731 / CDC346-86 / RSK2980).